Here is a 603-residue protein sequence, read N- to C-terminus: Serine protease 56 (603 aa).

An N-terminal signal peptide occupies residues 1 to 19 (MLLAVLLLLPLPSSWFAHG). Positions 64 to 96 (SHECRGSGRPRPQALLQDPPEPGPCGERRPSTA) are disordered. Asn97 is a glycosylation site (N-linked (GlcNAc...) asparagine). Residues 105–337 (IVGGSAAPPG…FKDWLQEQMS (233 aa)) form the Peptidase S1 domain. Cys130 and Cys146 are oxidised to a cystine. Catalysis depends on charge relay system residues His145 and Asp191. 3 disulfide bridges follow: Cys225/Cys292, Cys256/Cys271, and Cys282/Cys313. Ser286 acts as the Charge relay system in catalysis. Disordered regions lie at residues 442–474 (PARE…NGCP) and 573–603 (EGPW…ARQP).

Belongs to the peptidase S1 family. Expressed neural retina, cornea, sclera and optic nerve.

Functionally, serine protease required during eye development. The sequence is that of Serine protease 56 (PRSS56) from Homo sapiens (Human).